An 89-amino-acid polypeptide reads, in one-letter code: Bombyxin B-2 (89 aa).

The signal sequence occupies residues 1–19 (MKTSVMFMLVFVISLMCSS). Disulfide bonds link cysteine 29/cysteine 75, cysteine 41/cysteine 88, and cysteine 74/cysteine 79. Positions 48-66 (SGAQYAPYFWTRQYLGSRG) are cleaved as a propeptide — c peptide like.

It belongs to the insulin family. Heterodimer of a B chain and an A chain linked by two disulfide bonds.

It is found in the secreted. Brain peptide responsible for activation of prothoracic glands to produce ecdysone in insects. The polypeptide is Bombyxin B-2 (BBXB2) (Bombyx mori (Silk moth)).